We begin with the raw amino-acid sequence, 306 residues long: tRNA pseudouridine synthase B (306 aa).

Residue D48 is the Nucleophile of the active site.

This sequence belongs to the pseudouridine synthase TruB family. Type 1 subfamily.

It carries out the reaction uridine(55) in tRNA = pseudouridine(55) in tRNA. Its function is as follows. Responsible for synthesis of pseudouridine from uracil-55 in the psi GC loop of transfer RNAs. This is tRNA pseudouridine synthase B from Haemophilus influenzae (strain PittEE).